A 244-amino-acid polypeptide reads, in one-letter code: Tyrosine recombinase XerD-like (244 aa).

The Core-binding (CB) domain maps to 1–73; sequence MRDRISAFLE…ACNQFLYFLY (73 aa). The 155-residue stretch at 90–244 folds into the Tyr recombinase domain; it reads AEKKTEKPEI…KTVLTLEKYR (155 aa). Active-site residues include K150 and R211. Residue Y243 is the O-(3'-phospho-DNA)-tyrosine intermediate of the active site.

Belongs to the 'phage' integrase family. XerD-like subfamily.

Its subcellular location is the cytoplasm. Functionally, putative tyrosine recombinase. Not involved in the cutting and rejoining of the recombining DNA molecules on dif(SL) site. The sequence is that of Tyrosine recombinase XerD-like from Streptococcus pneumoniae serotype 2 (strain D39 / NCTC 7466).